A 555-amino-acid chain; its full sequence is Transmembrane protein 87B (555 aa).

The signal sequence occupies residues Met1–Ala42. The Lumenal portion of the chain corresponds to Val43–Trp214. 2 N-linked (GlcNAc...) asparagine glycosylation sites follow: Asn68 and Asn197. The chain crosses the membrane as a helical span at residues Pro215 to Leu235. Over Thr236–Arg247 the chain is Cytoplasmic. A helical transmembrane segment spans residues Ile248–Ser268. Residues Glu269 to Arg299 are Lumenal-facing. An N-linked (GlcNAc...) asparagine glycan is attached at Asn272. A helical transmembrane segment spans residues Leu300–Met320. The Cytoplasmic segment spans residues His321–Arg322. The chain crosses the membrane as a helical span at residues Val323–Ile343. The Lumenal segment spans residues Gly344 to Ala350. A helical membrane pass occupies residues Val351–Ile371. Residues Ser372 to Lys396 are Cytoplasmic-facing. The chain crosses the membrane as a helical span at residues Asn397 to Phe417. The Lumenal portion of the chain corresponds to Arg418–Arg429. The chain crosses the membrane as a helical span at residues Trp430–Leu450. Residues Trp451–Met555 are Cytoplasmic-facing. Phosphoserine occurs at positions 469, 494, 496, and 534.

It belongs to the LU7TM family. TMEM87 subfamily.

Its subcellular location is the golgi apparatus membrane. In terms of biological role, may be involved in retrograde transport from endosomes to the trans-Golgi network (TGN). This is Transmembrane protein 87B from Homo sapiens (Human).